We begin with the raw amino-acid sequence, 432 residues long: Bifunctional IPC transferase and DIPP synthase (432 aa).

Residues 3 to 225 are mobA-like NTP transferase; that stretch reads PERAVILAAG…RARRMLVRTA (223 aa). CTP is bound by residues 9–11, Lys22, and Glu113; that span reads LAA. Residue Glu113 coordinates Mg(2+). A CDP-alcohol phosphatidyltransferases region spans residues 226–426; it reads VKGTGDGFVS…LTLYFVVKKV (201 aa). The next 3 helical transmembrane spans lie at 264–284, 337–356, and 385–405; these read FLLG…AGIL, IWYF…SYST, and VFLT…ALFL.

The protein in the N-terminal section; belongs to the MobA family. In the C-terminal section; belongs to the CDP-alcohol phosphatidyltransferase class-I family. Mg(2+) is required as a cofactor.

The protein localises to the membrane. It catalyses the reaction 1D-myo-inositol 3-phosphate + CTP + H(+) = CDP-1L-myo-inositol + diphosphate. It carries out the reaction CDP-1L-myo-inositol + 1D-myo-inositol 3-phosphate = bis(1L-myo-inositol) 3,1'-phosphate 1-phosphate + CMP + H(+). In terms of biological role, involved in biosynthesis of di-myo-inositol phosphate (DIP), a widespread organic solute in microorganisms adapted to hot environments. Catalyzes the condensation of CTP and L-myo-inositol-1-phosphate into CDP-L-myo-inositol, as well as the biosynthesis of di-myo-inositol-1,3'-phosphate-1'-phosphate (DIPP) from CDP-L-myo-inositol and L-myo-inositol-1-phosphate. This is Bifunctional IPC transferase and DIPP synthase from Thermococcus kodakarensis (strain ATCC BAA-918 / JCM 12380 / KOD1) (Pyrococcus kodakaraensis (strain KOD1)).